The chain runs to 553 residues: Muellerian-inhibiting factor (553 aa).

The N-terminal stretch at 1 to 22 is a signal peptide; it reads MQGPHLSLLLLLLATMGAVLQA. A propeptide spanning residues 23 to 445 is cleaved from the precursor; sequence DTVEELTNTR…GREGRGRAGR (423 aa). 2 N-linked (GlcNAc...) asparagine glycosylation sites follow: Asn325 and Asn409. Intrachain disulfides connect Cys455/Cys519, Cys481/Cys550, and Cys485/Cys552.

This sequence belongs to the TGF-beta family. In terms of assembly, homodimer; disulfide-linked. Preproprotein is proteolytically processed to generate N- and C-terminal cleavage products that homodimerize and associate to form a biologically active non-covalent complex. Binding of the non-covalent complex to AMHR2 induces dissociation of the pro-region from the mature C-terminal dimer. The N-terminal portion of the protein, despite having no intrinsic activity, has the role of amplifying the activity of the C-terminus. As to expression, mainly expressed in granulosa cells from preantral and small antral follicles.

The protein localises to the secreted. In terms of biological role, plays an important role in several reproductive functions. Induces Muellerian duct regression during male fetal sexual differentiation and plays a role in Leydig cell differentiation and function. In female acts as a negative regulator of the primordial to primary follicle transition and decreases FSH sensitivity of growing follicles. AMH signals by binding to a specific type-II receptor, AMHR2, that heterodimerizes with type-I receptors (ACVR1 and BMPR1A), and recruiting SMAD proteins that are translocated to the nucleus to regulate target gene expression. The polypeptide is Muellerian-inhibiting factor (Amh) (Rattus norvegicus (Rat)).